The sequence spans 687 residues: uncharacterized protein (687 aa).

Helical transmembrane passes span 28–48 (IIFT…TIVV), 66–86 (WAVT…GKLG), 94–114 (VLLG…LSQT), 126–146 (GVGA…VVPL), 154–174 (GVLG…GGWL), 182–202 (WAFW…ATAV), 211–231 (PVID…LIMA), 243–263 (SATI…FVWL), 287–307 (VLSF…PIYL), 320–340 (LRTL…GVLV), 348–368 (IFPV…SQMD), 378–398 (LYLV…VLIV), 414–434 (VTFF…ALFV), and 480–500 (LTQV…LALL).

Belongs to the major facilitator superfamily. TCR/Tet family.

It is found in the cell membrane. This is an uncharacterized protein from Mycobacterium tuberculosis (strain CDC 1551 / Oshkosh).